The primary structure comprises 878 residues: Valine--tRNA ligase (878 aa).

A 'HIGH' region motif is present at residues 43 to 53 (PYPTGRLHLGH). Residues 527 to 531 (KMSKS) carry the 'KMSKS' region motif. Position 530 (lysine 530) interacts with ATP.

Belongs to the class-I aminoacyl-tRNA synthetase family. ValS type 2 subfamily.

Its subcellular location is the cytoplasm. It catalyses the reaction tRNA(Val) + L-valine + ATP = L-valyl-tRNA(Val) + AMP + diphosphate. Functionally, catalyzes the attachment of valine to tRNA(Val). As ValRS can inadvertently accommodate and process structurally similar amino acids such as threonine, to avoid such errors, it has a 'posttransfer' editing activity that hydrolyzes mischarged Thr-tRNA(Val) in a tRNA-dependent manner. The protein is Valine--tRNA ligase of Methanocaldococcus jannaschii (strain ATCC 43067 / DSM 2661 / JAL-1 / JCM 10045 / NBRC 100440) (Methanococcus jannaschii).